We begin with the raw amino-acid sequence, 220 residues long: Serine protease-like protein 51 (220 aa).

The N-terminal stretch at 1–16 (MFQLLIPLLLALKGHA) is a signal peptide. The Peptidase S1 domain occupies 23–220 (VQCGHRPAFP…SSKWVSSVGA (198 aa)). The N-linked (GlcNAc...) asparagine glycan is linked to N33. Residues C64 and C80 are joined by a disulfide bond. N92 carries an N-linked (GlcNAc...) asparagine glycan. C157 and C170 are oxidised to a cystine.

It belongs to the peptidase S1 family.

The protein resides in the secreted. This Homo sapiens (Human) protein is Serine protease-like protein 51.